The sequence spans 146 residues: Hemoglobin subunit beta (146 aa).

Val-1 is modified (N-acetylvaline). The Globin domain maps to 2 to 146 (HLTADEKAAV…VATALAHKYH (145 aa)). Ser-44 is modified (phosphoserine). The residue at position 59 (Lys-59) is an N6-acetyllysine. His-63 serves as a coordination point for heme b. The residue at position 82 (Lys-82) is an N6-acetyllysine. Position 92 (His-92) interacts with heme b. At Cys-93 the chain carries S-nitrosocysteine. N6-acetyllysine is present on Lys-144.

Belongs to the globin family. As to quaternary structure, heterotetramer of two alpha chains and two beta chains. As to expression, red blood cells.

Involved in oxygen transport from the lung to the various peripheral tissues. In Myotis velifer (Mouse-eared bat), this protein is Hemoglobin subunit beta (HBB).